A 209-amino-acid polypeptide reads, in one-letter code: Glycerol-3-phosphate acyltransferase (209 aa).

Helical transmembrane passes span 7–27 (IELA…AIIV), 85–105 (AIIL…FFGF), 117–137 (VMFG…LFVA), 142–162 (ISSL…YLLA), and 166–183 (MAWV…FWRH).

This sequence belongs to the PlsY family. Probably interacts with PlsX.

The protein resides in the cell inner membrane. The catalysed reaction is an acyl phosphate + sn-glycerol 3-phosphate = a 1-acyl-sn-glycero-3-phosphate + phosphate. The protein operates within lipid metabolism; phospholipid metabolism. In terms of biological role, catalyzes the transfer of an acyl group from acyl-phosphate (acyl-PO(4)) to glycerol-3-phosphate (G3P) to form lysophosphatidic acid (LPA). This enzyme utilizes acyl-phosphate as fatty acyl donor, but not acyl-CoA or acyl-ACP. The protein is Glycerol-3-phosphate acyltransferase of Hydrogenovibrio crunogenus (strain DSM 25203 / XCL-2) (Thiomicrospira crunogena).